We begin with the raw amino-acid sequence, 865 residues long: MPHVDLNPLKQRMQAARAAAVAQFRQHPRPDMLLTELRRIVDQALRELVKLCPLPAGATLAAVGGYGRGELYPHSDVDLLILLPQPPSAADARAVEALVAALWDLGLEPGHSVRTLEDCEREARGDITVETALLESRWLAGSRTLMKRLDSAMQARLDAAVFFQAKRVEMQQRHARYQDTPYALEPNCKESPGGLRDLQVILWMARAAGFGHSWREVAQAGLLTSSEARDLRRAEQAFKRLRIELHLLTGRREDRVLFDLQPGLAAVYGIASTATRRASELLMQRYYWAARLVTQLNVILVQNIEERLFPRPDSDARLIDDDFRNLRERLDIVREDGFERNPTLLLRAFLVMQQHPELIGMSARTLRAIWHSRHRIDAQFRRNPVNRKLFLQILQQPRGIVHELRRMTMLNILPRYLPVFRRIVGQMQHDLFHVYTVDQHTLAVVRNLRRFTMPEHAQEYPLASQLIAGLDRHWLLYVAALFHDIAKGRGGDHSELGAREVRRFAQDHGLDPADAELVEFLVRHHLLMSAVAQKRDLSDPQVVRDFAAQVGDERRLAALYLLTVADIRGTSPRVWNAWKGKLLEDLFRLALAALGGAHADAHTVLTERKDEAARLTRLAGLRDDAREAFWNQLDIAYFLRHDASEIAWHTRHLYYQVAPDEPVVRVRPTEHGEGLQVMVYTRDAPDLFVTTCGYFDAKSLSVQDARVHTTRHGWALDSFIVLAPEGFADLRAQATLVEHELAERLRDPHAARHAHAPRRLPHSHARRSRVFPVMPQAELSPDERSQSWRLSVTATDRPGLLYALARVFAEHGVDLIMAKIMTLGERVEDVFIVSGSALERPRSQMQFERAILDALAGDEPRQQAA.

The segment at 1–318 (MPHVDLNPLK…FPRPDSDARL (318 aa)) is uridylyltransferase. The tract at residues 319 to 675 (IDDDFRNLRE…VRPTEHGEGL (357 aa)) is uridylyl-removing. The HD domain maps to 437–559 (VDQHTLAVVR…VGDERRLAAL (123 aa)). ACT domains are found at residues 676-762 (QVMV…RLPH) and 789-865 (RLSV…QQAA). The segment at 747-767 (DPHAARHAHAPRRLPHSHARR) is disordered. Residues 751 to 767 (ARHAHAPRRLPHSHARR) show a composition bias toward basic residues.

This sequence belongs to the GlnD family. Mg(2+) serves as cofactor.

The enzyme catalyses [protein-PII]-L-tyrosine + UTP = [protein-PII]-uridylyl-L-tyrosine + diphosphate. It catalyses the reaction [protein-PII]-uridylyl-L-tyrosine + H2O = [protein-PII]-L-tyrosine + UMP + H(+). Its activity is regulated as follows. Uridylyltransferase (UTase) activity is inhibited by glutamine, while glutamine activates uridylyl-removing (UR) activity. In terms of biological role, modifies, by uridylylation and deuridylylation, the PII regulatory proteins (GlnB and homologs), in response to the nitrogen status of the cell that GlnD senses through the glutamine level. Under low glutamine levels, catalyzes the conversion of the PII proteins and UTP to PII-UMP and PPi, while under higher glutamine levels, GlnD hydrolyzes PII-UMP to PII and UMP (deuridylylation). Thus, controls uridylylation state and activity of the PII proteins, and plays an important role in the regulation of nitrogen assimilation and metabolism. The sequence is that of Bifunctional uridylyltransferase/uridylyl-removing enzyme from Bordetella parapertussis (strain 12822 / ATCC BAA-587 / NCTC 13253).